Here is a 935-residue protein sequence, read N- to C-terminus: Coiled-coil domain-containing protein 191 (935 aa).

4 coiled-coil regions span residues 189–324, 366–438, 554–589, and 660–740; these read RLTM…ENQQ, YTRS…ALLK, RHVFQQQLIEKQKKKLQEQQKTILELKKNQRLAEAQ, and KAME…LEAI. Disordered stretches follow at residues 596-661 and 678-715; these read SAVT…ILKA and EKKKKQEEEKLAQLKAQEEERQKREAEEKEAQLERKRE.

In Macaca fascicularis (Crab-eating macaque), this protein is Coiled-coil domain-containing protein 191 (CCDC191).